Here is a 203-residue protein sequence, read N- to C-terminus: MIGRLRGIILEKQPPLVLLEVGGVGYEVHMPMTCFYELPESGKEATVFTHFVVREDAQLLYGFNNKQERTLFKELIKTNGVGPKLALAILSGMSAQQFVNAVEREEPAALVKLPGIGKKTAERLIVEMKDRFKGLHGDLFTPAADLVLTSPASPATDDAEQEAVAALVALGYKPQEASRMVSKIARPDASSETLIREALRAAL.

Residues 1–64 (MIGRLRGIIL…EDAQLLYGFN (64 aa)) form a domain I region. Residues 65–142 (NKQERTLFKE…KGLHGDLFTP (78 aa)) form a domain II region. Residues 143–154 (AADLVLTSPASP) are flexible linker. A domain III region spans residues 155 to 203 (ATDDAEQEAVAALVALGYKPQEASRMVSKIARPDASSETLIREALRAAL).

The protein belongs to the RuvA family. Homotetramer. Forms an RuvA(8)-RuvB(12)-Holliday junction (HJ) complex. HJ DNA is sandwiched between 2 RuvA tetramers; dsDNA enters through RuvA and exits via RuvB. An RuvB hexamer assembles on each DNA strand where it exits the tetramer. Each RuvB hexamer is contacted by two RuvA subunits (via domain III) on 2 adjacent RuvB subunits; this complex drives branch migration. In the full resolvosome a probable DNA-RuvA(4)-RuvB(12)-RuvC(2) complex forms which resolves the HJ.

Its subcellular location is the cytoplasm. The RuvA-RuvB-RuvC complex processes Holliday junction (HJ) DNA during genetic recombination and DNA repair, while the RuvA-RuvB complex plays an important role in the rescue of blocked DNA replication forks via replication fork reversal (RFR). RuvA specifically binds to HJ cruciform DNA, conferring on it an open structure. The RuvB hexamer acts as an ATP-dependent pump, pulling dsDNA into and through the RuvAB complex. HJ branch migration allows RuvC to scan DNA until it finds its consensus sequence, where it cleaves and resolves the cruciform DNA. The protein is Holliday junction branch migration complex subunit RuvA of Citrobacter koseri (strain ATCC BAA-895 / CDC 4225-83 / SGSC4696).